The chain runs to 139 residues: Large-conductance mechanosensitive channel (139 aa).

The next 3 helical transmembrane spans lie at 14-34 (VVDL…VNSA), 38-58 (IFMP…YYIP), and 82-102 (GQFL…FLVI).

Belongs to the MscL family. In terms of assembly, homopentamer.

The protein localises to the cell inner membrane. Its function is as follows. Channel that opens in response to stretch forces in the membrane lipid bilayer. May participate in the regulation of osmotic pressure changes within the cell. This Methylobacterium radiotolerans (strain ATCC 27329 / DSM 1819 / JCM 2831 / NBRC 15690 / NCIMB 10815 / 0-1) protein is Large-conductance mechanosensitive channel.